Reading from the N-terminus, the 160-residue chain is Putative 4-hydroxy-4-methyl-2-oxoglutarate aldolase (160 aa).

Residues 78 to 81 (GDVI) and R100 contribute to the substrate site. D101 provides a ligand contact to a divalent metal cation.

The protein belongs to the class II aldolase/RraA-like family. Homotrimer. A divalent metal cation is required as a cofactor.

It carries out the reaction 4-hydroxy-4-methyl-2-oxoglutarate = 2 pyruvate. The catalysed reaction is oxaloacetate + H(+) = pyruvate + CO2. Its function is as follows. Catalyzes the aldol cleavage of 4-hydroxy-4-methyl-2-oxoglutarate (HMG) into 2 molecules of pyruvate. Also contains a secondary oxaloacetate (OAA) decarboxylase activity due to the common pyruvate enolate transition state formed following C-C bond cleavage in the retro-aldol and decarboxylation reactions. This is Putative 4-hydroxy-4-methyl-2-oxoglutarate aldolase from Mycolicibacterium vanbaalenii (strain DSM 7251 / JCM 13017 / BCRC 16820 / KCTC 9966 / NRRL B-24157 / PYR-1) (Mycobacterium vanbaalenii).